A 339-amino-acid polypeptide reads, in one-letter code: Retinol dehydrogenase 10-A (339 aa).

The helical; Signal-anchor transmembrane segment at 3–23 (IFVEFFLVMLKVCWAIVMAGF) threads the bilayer. 40–64 (VITGAGGGLGRLFAKEFARRRATLV) contributes to the NADP(+) binding site. Serine 195 serves as a coordination point for substrate. The active-site Proton acceptor is tyrosine 208.

This sequence belongs to the short-chain dehydrogenases/reductases (SDR) family.

The protein resides in the microsome membrane. Its subcellular location is the endoplasmic reticulum membrane. The catalysed reaction is all-trans-retinol + NADP(+) = all-trans-retinal + NADPH + H(+). The protein operates within cofactor metabolism; retinol metabolism. Functionally, retinol dehydrogenase with a clear preference for NADP. Converts all-trans-retinol to all-trans-retinal. Has no detectable activity towards 11-cis-retinol, 9-cis-retinol and 13-cis-retinol. The protein is Retinol dehydrogenase 10-A (rdh10a) of Danio rerio (Zebrafish).